The chain runs to 421 residues: D-amino acid dehydrogenase (421 aa).

An FAD-binding site is contributed by 3–17; sequence VTILGAGVIGVTSAY.

The protein belongs to the DadA oxidoreductase family. The cofactor is FAD.

The enzyme catalyses a D-alpha-amino acid + A + H2O = a 2-oxocarboxylate + AH2 + NH4(+). It functions in the pathway amino-acid degradation; D-alanine degradation; NH(3) and pyruvate from D-alanine: step 1/1. Its function is as follows. Oxidative deamination of D-amino acids. The polypeptide is D-amino acid dehydrogenase (Allorhizobium ampelinum (strain ATCC BAA-846 / DSM 112012 / S4) (Agrobacterium vitis (strain S4))).